We begin with the raw amino-acid sequence, 417 residues long: D-inositol 3-phosphate glycosyltransferase (417 aa).

His-10 lines the 1D-myo-inositol 3-phosphate pocket. UDP-N-acetyl-alpha-D-glucosamine-binding positions include 16–17 and Gly-24; that span reads QP. Residues 21-26, Lys-79, Tyr-112, Thr-136, and Arg-156 contribute to the 1D-myo-inositol 3-phosphate site; that span reads DAGGMN. Arg-230, Lys-235, and Gln-296 together coordinate UDP-N-acetyl-alpha-D-glucosamine. Mg(2+) contacts are provided by Tyr-305, Arg-306, and Ala-308. 2 residues coordinate UDP-N-acetyl-alpha-D-glucosamine: Glu-318 and Glu-326. Thr-332 is a binding site for Mg(2+).

The protein belongs to the glycosyltransferase group 1 family. MshA subfamily. As to quaternary structure, homodimer.

It catalyses the reaction 1D-myo-inositol 3-phosphate + UDP-N-acetyl-alpha-D-glucosamine = 1D-myo-inositol 2-acetamido-2-deoxy-alpha-D-glucopyranoside 3-phosphate + UDP + H(+). Functionally, catalyzes the transfer of a N-acetyl-glucosamine moiety to 1D-myo-inositol 3-phosphate to produce 1D-myo-inositol 2-acetamido-2-deoxy-glucopyranoside 3-phosphate in the mycothiol biosynthesis pathway. This is D-inositol 3-phosphate glycosyltransferase from Actinosynnema mirum (strain ATCC 29888 / DSM 43827 / JCM 3225 / NBRC 14064 / NCIMB 13271 / NRRL B-12336 / IMRU 3971 / 101).